A 552-amino-acid polypeptide reads, in one-letter code: Oxygen-dependent choline dehydrogenase (552 aa).

Residue 7–36 (DYIIIGAGSAGNVLAARLTEDKDTTVLLLE) participates in FAD binding. The Proton acceptor role is filled by H477.

Belongs to the GMC oxidoreductase family. The cofactor is FAD.

It catalyses the reaction choline + A = betaine aldehyde + AH2. The catalysed reaction is betaine aldehyde + NAD(+) + H2O = glycine betaine + NADH + 2 H(+). Its pathway is amine and polyamine biosynthesis; betaine biosynthesis via choline pathway; betaine aldehyde from choline (cytochrome c reductase route): step 1/1. Involved in the biosynthesis of the osmoprotectant glycine betaine. Catalyzes the oxidation of choline to betaine aldehyde and betaine aldehyde to glycine betaine at the same rate. The chain is Oxygen-dependent choline dehydrogenase from Acinetobacter baumannii (strain AB307-0294).